The sequence spans 107 residues: Essential MCU regulator, mitochondrial (107 aa).

The transit peptide at 1–47 (MASGAARWLALVRVGSGASRSWLSLRKGGDVSAGRSCSGQSLVPTRS) directs the protein to the mitochondrion. At 48–65 (VIVTRSGAILPKPVKMSF) the chain is on the mitochondrial matrix side. The helical transmembrane segment at 66-85 (GLLRVFSIVIPFLYVGTLIS) threads the bilayer. The GXXXX[G/A/S] motif lies at 81–85 (GTLIS). Residues 86-107 (KNFAALLEEHDIFVPEDDDDDD) lie on the Mitochondrial intermembrane side of the membrane.

Belongs to the SMDT1/EMRE family. In terms of assembly, component of the uniplex complex, composed of MCU, EMRE/SMDT1, MICU1 and MICU2 (or MICU3) in a 4:4:1:1 stoichiometry. The number of EMRE/SMDT1 molecules is hovewer variable, ranging from 1 to 4 copies per uniplex complex, leading to uniplex complexes with distinct gatekeeping profiles. Interacts (via its C-terminal poly-Asp tail) with MCUR1; the interaction is direct. Unprocessed form interacts (via transit peptide) with MAIP1. In terms of processing, undergoes proteolytic degradation in neurons: degraded by AFG3L2 and SPG7 before SMDT1/EMRE assembly with the uniporter complex, limiting the availability of SMDT1/EMRE for MCU assembly and promoting efficient assembly of gatekeeper subunits with MCU.

Its subcellular location is the mitochondrion inner membrane. Functionally, essential regulatory subunit of the mitochondrial calcium uniporter complex (uniplex), a complex that mediates calcium uptake into mitochondria. Required to bridge the calcium-sensing proteins MICU1 with the calcium-conducting subunit MCU. Acts by mediating activation of MCU and retention of MICU1 to the MCU pore, in order to ensure tight regulation of the uniplex complex and appropriate responses to intracellular calcium signaling. This is Essential MCU regulator, mitochondrial from Bos taurus (Bovine).